Consider the following 386-residue polypeptide: Methionine import ATP-binding protein MetN 2 (386 aa).

An ABC transporter domain is found at 32 to 272; that stretch reads VIFDDVGKVF…PQHDATRALL (241 aa). 69–76 provides a ligand contact to ATP; it reads GRSGAGKS.

Belongs to the ABC transporter superfamily. Methionine importer (TC 3.A.1.24) family. In terms of assembly, the complex is composed of two ATP-binding proteins (MetN), two transmembrane proteins (MetI) and a solute-binding protein (MetQ).

The protein localises to the cell inner membrane. The catalysed reaction is L-methionine(out) + ATP + H2O = L-methionine(in) + ADP + phosphate + H(+). It catalyses the reaction D-methionine(out) + ATP + H2O = D-methionine(in) + ADP + phosphate + H(+). In terms of biological role, part of the ABC transporter complex MetNIQ involved in methionine import. Responsible for energy coupling to the transport system. This chain is Methionine import ATP-binding protein MetN 2, found in Paraburkholderia xenovorans (strain LB400).